Reading from the N-terminus, the 665-residue chain is mRNA cleavage and polyadenylation factor CLP1 (665 aa).

Residues Lys-91 and 195 to 200 (SAGKTS) each bind ATP. 2 disordered regions span residues 218 to 283 (VKEG…SQAK) and 593 to 615 (PPPRNQSKDETSSPDDPGHHDYE). Composition is skewed to basic and acidic residues over residues 219-238 (KEGDDASRRAKHRSEPEIHP) and 598-614 (QSKDETSSPDDPGHHDY).

Belongs to the Clp1 family. Clp1 subfamily. As to quaternary structure, component of a pre-mRNA cleavage factor complex. Interacts directly with PCF11.

The protein resides in the nucleus. In terms of biological role, required for endonucleolytic cleavage during polyadenylation-dependent pre-mRNA 3'-end formation. This is mRNA cleavage and polyadenylation factor CLP1 from Malassezia globosa (strain ATCC MYA-4612 / CBS 7966) (Dandruff-associated fungus).